A 974-amino-acid polypeptide reads, in one-letter code: GATOR2 complex protein WDR59 (974 aa).

WD repeat units lie at residues 57–98 (QSKW…GEVG), 103–143 (GHTR…KPTV), 146–185 (SAVA…TAVE), 189–229 (AHLS…KYLN), 232–276 (PCQV…TPVH), 278–318 (FVGH…RVDS), and 319–362 (QMQR…TASH). A disordered region spans residues 350–374 (HTEDTDHQHTASHGEEEALKEDPPR). Residues 393–494 (QEFSLINVQI…RQLVSCLESF (102 aa)) enclose the RWD domain. The residue at position 564 (serine 564) is a Phosphoserine. The stretch at 668 to 706 (LNVNDIQETCQKNAASALLVGRKDLVQVWSLATVATDLC) is one WD 8 repeat. A phosphoserine mark is found at serine 821, serine 822, and serine 830. Residues 831–852 (LTYSDPRERERDQHDKNKRLLD) are disordered. Positions 835-851 (DPRERERDQHDKNKRLL) are enriched in basic and acidic residues. The C4-type zinc finger occupies 901–920 (YCSHCRSEVRGTQCAICKGF). Positions 902, 905, 914, 917, 927, 938, 943, 946, 949, 960, 964, 966, and 968 each coordinate Zn(2+). The RING-type; atypical zinc-finger motif lies at 921–973 (TFQCAICHVAVRGSSNFCLTCGHGGHTSHMMEWFRTQEVCPTGCGCHCLLEST).

Belongs to the WD repeat WDR59 family. As to quaternary structure, component of the GATOR2 subcomplex, composed of MIOS, SEC13, SEH1L, WDR24 and WDR59. The GATOR2 complex interacts with CASTOR1 and CASTOR2; the interaction is negatively regulated by arginine. The GATOR2 complex interacts with SESN1, SESN2 and SESN3; the interaction is negatively regulated by amino acids. Interacts with DDB1-CUL4A/B E3 ligase complexes.

It is found in the lysosome membrane. With respect to regulation, the GATOR2 complex is negatively regulated by the upstream amino acid sensors CASTOR1 and SESN2, which sequester the GATOR2 complex in absence of amino acids. In the presence of abundant amino acids, GATOR2 is released from CASTOR1 and SESN2 and activated. In terms of biological role, as a component of the GATOR2 complex, functions as an activator of the amino acid-sensing branch of the mTORC1 signaling pathway. The GATOR2 complex indirectly activates mTORC1 through the inhibition of the GATOR1 subcomplex. GATOR2 probably acts as an E3 ubiquitin-protein ligase toward GATOR1. In the presence of abundant amino acids, the GATOR2 complex mediates ubiquitination of the NPRL2 core component of the GATOR1 complex, leading to GATOR1 inactivation. In the absence of amino acids, GATOR2 is inhibited, activating the GATOR1 complex. This Homo sapiens (Human) protein is GATOR2 complex protein WDR59.